Here is a 374-residue protein sequence, read N- to C-terminus: Putative zinc metalloprotease R01501 (374 aa).

Position 26 (His-26) interacts with Zn(2+). The active site involves Glu-27. His-30 is a Zn(2+) binding site. 4 helical membrane passes run 36 to 55 (WSGI…LFGW), 112 to 134 (AATV…AVLF), 301 to 323 (VLNF…VPVL), and 348 to 367 (LAFR…AAWN). The region spanning 126 to 199 (AIAIFAVLFS…LPITVRIERE (74 aa)) is the PDZ domain.

The protein belongs to the peptidase M50B family. Zn(2+) serves as cofactor.

It localises to the cell inner membrane. This is Putative zinc metalloprotease R01501 from Rhizobium meliloti (strain 1021) (Ensifer meliloti).